An 826-amino-acid chain; its full sequence is Glycerol-3-phosphate acyltransferase 1, mitochondrial (826 aa).

Over 1–87 the chain is Cytoplasmic; the sequence is MDESALTLGT…FFNPSIPSLG (87 aa). The important for mitochondrial localization stretch occupies residues 80–120; that stretch reads NPSIPSLGLRNVIYINETHTRHRGWLARRLSYVLFIQERDV. The stretch at 88-118 is an intramembrane region; that stretch reads LRNVIYINETHTRHRGWLARRLSYVLFIQER. The Cytoplasmic portion of the chain corresponds to 119-826; it reads DVHKGMFATN…LEYILSFVVL (708 aa). The short motif at 230-235 is the HXXXXD motif element; that stretch reads HRSHID. Residues R278, R279, K288, R293, and R328 each contribute to the CoA site. S380 is subject to Phosphoserine. R462 is a binding site for CoA. Phosphoserine occurs at positions 686 and 693. 2 positions are modified to N6-acetyllysine: K778 and K782.

This sequence belongs to the GPAT/DAPAT family.

It localises to the mitochondrion outer membrane. The catalysed reaction is sn-glycerol 3-phosphate + an acyl-CoA = a 1-acyl-sn-glycero-3-phosphate + CoA. The enzyme catalyses (9Z,12Z)-octadecadienoyl-CoA + sn-glycerol 3-phosphate = 1-(9Z,12Z)-octadecadienoyl-sn-glycero-3-phosphate + CoA. It carries out the reaction sn-glycerol 3-phosphate + (9Z)-octadecenoyl-CoA = 1-(9Z-octadecenoyl)-sn-glycero-3-phosphate + CoA. It catalyses the reaction sn-glycerol 3-phosphate + octadecanoyl-CoA = 1-octadecanoyl-sn-glycero-3-phosphate + CoA. The catalysed reaction is sn-glycerol 3-phosphate + hexadecanoyl-CoA = 1-hexadecanoyl-sn-glycero-3-phosphate + CoA. The enzyme catalyses dodecanoyl-CoA + sn-glycerol 3-phosphate = 1-dodecanoyl-sn-glycerol 3-phosphate + CoA. It carries out the reaction 1-acyl-sn-glycero-3-phospho-(1'-sn-glycerol) + an acyl-CoA = a 1,2-diacyl-sn-glycero-3-phospho-(1'-sn-glycerol) + CoA. The protein operates within phospholipid metabolism; CDP-diacylglycerol biosynthesis; CDP-diacylglycerol from sn-glycerol 3-phosphate: step 1/3. Mitochondrial membrane protein that catalyzes the essential first step of biosynthesis of glycerolipids such as triglycerides, phosphatidic acids and lysophosphatidic acids. Esterifies acyl-group from acyl-coenzyme A (acyl-CoA) to the sn-1 position of glycerol-3-phosphate, to produce lysophosphatidic acid. Has a narrow hydrophobic binding cleft that selects for a linear acyl chain. Catalytic activity is higher for substrates with a 16-carbon acyl chain. This Sus scrofa (Pig) protein is Glycerol-3-phosphate acyltransferase 1, mitochondrial.